We begin with the raw amino-acid sequence, 240 residues long: Anti-H(O) lectin (240 aa).

N-linked (GlcNAc...) asparagine glycosylation occurs at N4. The Mn(2+) site is built by E124 and D126. Residues D126, Y128, N130, and D133 each coordinate Ca(2+). Mn(2+) is bound by residues D133 and H141.

It belongs to the leguminous lectin family.

In terms of biological role, L-fucose specific lectin. In Lotus tetragonolobus (Winged pea), this protein is Anti-H(O) lectin.